The chain runs to 339 residues: MEEAHNMREIRLREIVVNHAVLSSCLDKCGDCFASEAARIKFDNDIEAIFELKRKRNAVILAHNYQTPEIFHGVADIVGDSLALARKAIDVDADVIVLAGVHFMAETAKLLNPEKTVLIPDMEAGCSLAESITPEDVALLRQTYPGIPIVTYVNTSAAVKAASDICCTSGNAKKVVEALGVPKVLMIPDEYLARNVAKETEVQIISWHGHCEVHELFSASDILQLRENHPGVTVLAHPECPPDVVAAADFAGSTAAMSDYVTTKQPKRVVLLTECSMSDNIAVHHPDVEFISSCNLCPHMKRITLANIRTALEENRHEVTVDAKIAAPARRAVERMLAI.

2 residues coordinate iminosuccinate: His-63 and Ser-81. Cys-126 serves as a coordination point for [4Fe-4S] cluster. Residues 152 to 154 and Ser-169 contribute to the iminosuccinate site; that span reads YVN. Residue Cys-211 participates in [4Fe-4S] cluster binding. Residues 237-239 and Thr-254 contribute to the iminosuccinate site; that span reads HPE. Residue Cys-297 participates in [4Fe-4S] cluster binding.

It belongs to the quinolinate synthase family. Type 2 subfamily. [4Fe-4S] cluster serves as cofactor.

It localises to the cytoplasm. The enzyme catalyses iminosuccinate + dihydroxyacetone phosphate = quinolinate + phosphate + 2 H2O + H(+). It functions in the pathway cofactor biosynthesis; NAD(+) biosynthesis; quinolinate from iminoaspartate: step 1/1. Catalyzes the condensation of iminoaspartate with dihydroxyacetone phosphate to form quinolinate. This chain is Quinolinate synthase, found in Xylella fastidiosa (strain 9a5c).